A 304-amino-acid chain; its full sequence is Ribosomal protein L11 methyltransferase (304 aa).

S-adenosyl-L-methionine is bound by residues Thr-152, Gly-173, Asp-195, and Asn-234.

It belongs to the methyltransferase superfamily. PrmA family.

The protein resides in the cytoplasm. The catalysed reaction is L-lysyl-[protein] + 3 S-adenosyl-L-methionine = N(6),N(6),N(6)-trimethyl-L-lysyl-[protein] + 3 S-adenosyl-L-homocysteine + 3 H(+). Methylates ribosomal protein L11. This chain is Ribosomal protein L11 methyltransferase, found in Cupriavidus metallidurans (strain ATCC 43123 / DSM 2839 / NBRC 102507 / CH34) (Ralstonia metallidurans).